The sequence spans 70 residues: Putative membrane protein insertion efficiency factor (70 aa).

It belongs to the UPF0161 family.

It is found in the cell inner membrane. In terms of biological role, could be involved in insertion of integral membrane proteins into the membrane. This is Putative membrane protein insertion efficiency factor from Desulforapulum autotrophicum (strain ATCC 43914 / DSM 3382 / VKM B-1955 / HRM2) (Desulfobacterium autotrophicum).